The primary structure comprises 274 residues: MSAAIEKETGMLDVGKHCAYCRQLDFLPFHCSFCNEDFCSNHRLKEDHHCRWLLEHEEVHKTEKSPSKSRDGSSSNDEAYFKSLLPERASVRIQRVSETREPLRGSNTAKVSSTLNSKTLDKIFKFFQRNEKRKSNNKSKKNFGSSSNKIIQLANLKKIAKGDPKIPMQNRIYIWCYLVDGDETDIAKEDTRMPLYINKMWPVGRAMDYLSIQLNVKSSTLTNSSSNDKFQLCKLKEGKQVSFYNIGASLRVTNEIKDLDTLYLVHNNADEKSN.

The AN1-type zinc-finger motif lies at 12–58; the sequence is LDVGKHCAYCRQLDFLPFHCSFCNEDFCSNHRLKEDHHCRWLLEHEE. Zn(2+) contacts are provided by C18, C21, C31, C34, C39, H42, H48, and C50. A ubiquitin-like region spans residues 170 to 266; it reads NRIYIWCYLV…KDLDTLYLVH (97 aa). The residue at position 273 (S273) is a Phosphoserine.

Interacts (via its ubiquitin-like domain) with CDC48 (via N-terminus). Associates with the 26S proteasome. Specifically interacts with the regulatory particle (RP) subunit RPN2. Exposure to arsenite, a known inducer of protein misfolding resulting in accumulation of polyubiquitinated conjugates, enhances the association with the proteoasome. Binds to ubiquitinated proteins conjugated to a 4 or more molecule ubiquitin chain. Binding to ubiquitinated proteins is zinc-dependent.

Its subcellular location is the cytoplasm. The protein localises to the nucleus. Functionally, promotes efficient arsenite-induced clearance of stress granules (SGs). May have a role in the ubiquitin-proteasome system (UPS) protecting cells from metalloid-induced proteotoxicity. This chain is CDC48-associated ubiquitin-like/zinc finger protein 1, found in Saccharomyces cerevisiae (strain ATCC 204508 / S288c) (Baker's yeast).